Here is a 163-residue protein sequence, read N- to C-terminus: Small ribosomal subunit protein uS5 (163 aa).

The 64-residue stretch at 8-71 folds into the S5 DRBM domain; it reads LIEKIVDLNR…ERAKKGMVQV (64 aa).

Belongs to the universal ribosomal protein uS5 family. Part of the 30S ribosomal subunit. Contacts proteins S4 and S8.

Its function is as follows. With S4 and S12 plays an important role in translational accuracy. Located at the back of the 30S subunit body where it stabilizes the conformation of the head with respect to the body. The chain is Small ribosomal subunit protein uS5 from Oleidesulfovibrio alaskensis (strain ATCC BAA-1058 / DSM 17464 / G20) (Desulfovibrio alaskensis).